Here is a 140-residue protein sequence, read N- to C-terminus: Nucleoside diphosphate kinase (140 aa).

Positions 11, 59, 87, 93, 104, and 114 each coordinate ATP. His-117 (pros-phosphohistidine intermediate) is an active-site residue.

The protein belongs to the NDK family. Homotetramer. Requires Mg(2+) as cofactor.

Its subcellular location is the cytoplasm. It catalyses the reaction a 2'-deoxyribonucleoside 5'-diphosphate + ATP = a 2'-deoxyribonucleoside 5'-triphosphate + ADP. It carries out the reaction a ribonucleoside 5'-diphosphate + ATP = a ribonucleoside 5'-triphosphate + ADP. Major role in the synthesis of nucleoside triphosphates other than ATP. The ATP gamma phosphate is transferred to the NDP beta phosphate via a ping-pong mechanism, using a phosphorylated active-site intermediate. The protein is Nucleoside diphosphate kinase of Gluconacetobacter diazotrophicus (strain ATCC 49037 / DSM 5601 / CCUG 37298 / CIP 103539 / LMG 7603 / PAl5).